The primary structure comprises 115 residues: Insulin (115 aa).

Positions 1-22 are cleaved as a signal peptide; that stretch reads MAALWLQSVSLLVLMLVSWSGS. 3 disulfides stabilise this stretch: C32–C101, C44–C114, and C100–C105. A propeptide spans 56-92 (c peptide); the sequence is DVDPLLGFLPAKSGGAAAGGENEVAEFAFKDQMEMMV.

Belongs to the insulin family. As to quaternary structure, heterodimer of a B chain and an A chain linked by two disulfide bonds.

It localises to the secreted. Functionally, insulin decreases blood glucose concentration. It increases cell permeability to monosaccharides, amino acids and fatty acids. It accelerates glycolysis, the pentose phosphate cycle, and glycogen synthesis in liver. This chain is Insulin (ins), found in Verasper moseri (Barfin flounder).